We begin with the raw amino-acid sequence, 806 residues long: Acetyl-CoA decarbonylase/synthase complex subunit alpha 1 (806 aa).

Cys73, Cys76, Cys77, Cys79, Cys84, and Cys94 together coordinate [4Fe-4S] cluster. His117 contacts CO. [Ni-4Fe-4S] cluster is bound by residues His250, Cys278, and Cys323. 2 4Fe-4S ferredoxin-type domains span residues 407–436 and 446–475; these read DEEFTNWVMKCADCGACMIACPEELDIPEA and SYLDILHDQCIGCRRCEQVCKKEIPILNII. Residues Cys417, Cys420, Cys423, Cys427, Cys455, Cys458, Cys461, and Cys465 each contribute to the [4Fe-4S] cluster site. Positions 523, 552, and 587 each coordinate [Ni-4Fe-4S] cluster.

Belongs to the Ni-containing carbon monoxide dehydrogenase family. As to quaternary structure, heterotetramer of two alpha and two epsilon subunits. The ACDS complex is made up of alpha, epsilon, beta, gamma and delta subunits with a probable stoichiometry of (alpha(2)epsilon(2))(4)-beta(8)-(gamma(1)delta(1))(8). It depends on [4Fe-4S] cluster as a cofactor. Requires [Ni-4Fe-4S] cluster as cofactor.

The catalysed reaction is CO + 2 oxidized [2Fe-2S]-[ferredoxin] + H2O = 2 reduced [2Fe-2S]-[ferredoxin] + CO2 + 2 H(+). It functions in the pathway one-carbon metabolism; methanogenesis from acetate. Its activity is regulated as follows. Carbon monoxide dehydrogenase activity is inhibited by KCN and is rapidly inactivated by O(2). In terms of biological role, part of the ACDS complex that catalyzes the reversible cleavage of acetyl-CoA, allowing growth on acetate as sole source of carbon and energy. The alpha-epsilon subcomponent functions as a carbon monoxide dehydrogenase. This Methanosarcina barkeri (strain Fusaro / DSM 804) protein is Acetyl-CoA decarbonylase/synthase complex subunit alpha 1.